Here is a 1762-residue protein sequence, read N- to C-terminus: Lysine-specific demethylase 3B (1762 aa).

An N-acetylalanine modification is found at A2. Disordered stretches follow at residues 253 to 350 (MDSS…FVPQ) and 426 to 468 (TTAS…NSSL). The segment covering 299 to 310 (ATKKLKGDRGEV) has biased composition (basic and acidic residues). The segment covering 426–435 (TTASSTPTTV) has biased composition (low complexity). Residues 453 to 465 (GSWSQASGENSRN) show a composition bias toward polar residues. A phosphoserine mark is found at S493, S547, S557, and S561. The disordered stretch occupies residues 574-613 (SVLGADTQPGPKAGSSVDRKVPAESMPTLTPAFPRSLLNT). T615 is subject to Phosphothreonine. Residues 713–746 (TGSPSLSAVGNGRSSSPTNSLTQPIEMPTLSSSP) are compositionally biased toward polar residues. Positions 713 to 763 (TGSPSLSAVGNGRSSSPTNSLTQPIEMPTLSSSPTEERPTVGPGQQDNPLL) are disordered. S767, S774, and S779 each carry phosphoserine. A Glycyl lysine isopeptide (Lys-Gly) (interchain with G-Cter in SUMO2) cross-link involves residue K789. S799 bears the Phosphoserine mark. The interval 806–853 (ACRQDSDSSTNSDLSDLSDSEEQLQAKSGLKGIPEHLMGKLGPNGERS) is disordered. The C6-type zinc-finger motif lies at 1032–1057 (CDVCETTLFNIHWVCRKCGFGVCLDC). Polar residues predominate over residues 1146–1163 (QLPSVTPSASSGNETTFS). The disordered stretch occupies residues 1146 to 1217 (QLPSVTPSAS…AIRPPCPDTA (72 aa)). Phosphoserine is present on residues S1254 and S1260. Residues 1285 to 1306 (SNSKTEGSSLRDLLHSGPGKLP) form a disordered region. The LXXLL motif motif lies at 1294–1298 (LRDLL). A JmjC domain is found at 1499–1722 (MPTRFEDLME…HCFRLTQEFR (224 aa)). Residues H1561, D1563, and H1690 each contribute to the Fe cation site.

Belongs to the JHDM2 histone demethylase family. Fe(2+) is required as a cofactor.

It localises to the nucleus. It carries out the reaction N(6),N(6)-dimethyl-L-lysyl(9)-[histone H3] + 2 2-oxoglutarate + 2 O2 = L-lysyl(9)-[histone H3] + 2 formaldehyde + 2 succinate + 2 CO2. Histone demethylase that specifically demethylates 'Lys-9' of histone H3, thereby playing a central role in histone code. Demethylation of Lys residue generates formaldehyde and succinate May have tumor suppressor activity. This chain is Lysine-specific demethylase 3B (Kdm3b), found in Mus musculus (Mouse).